The sequence spans 70 residues: UPF0434 protein MCA0634 (70 aa).

Belongs to the UPF0434 family.

The protein is UPF0434 protein MCA0634 of Methylococcus capsulatus (strain ATCC 33009 / NCIMB 11132 / Bath).